The primary structure comprises 160 residues: Transcription elongation factor GreA (160 aa).

Residues 14–76 adopt a coiled-coil conformation; the sequence is VKKLEEELEY…QLENMLKNAS (63 aa).

It belongs to the GreA/GreB family.

Functionally, necessary for efficient RNA polymerase transcription elongation past template-encoded arresting sites. The arresting sites in DNA have the property of trapping a certain fraction of elongating RNA polymerases that pass through, resulting in locked ternary complexes. Cleavage of the nascent transcript by cleavage factors such as GreA or GreB allows the resumption of elongation from the new 3'terminus. GreA releases sequences of 2 to 3 nucleotides. This is Transcription elongation factor GreA from Clostridium botulinum (strain Okra / Type B1).